We begin with the raw amino-acid sequence, 229 residues long: Tubulin-specific chaperone B (229 aa).

The region spanning 170 to 212 (GATKFKEGVWVGVKYDEPVGKNDGSVAGVRYFDCDPKYGGFVR) is the CAP-Gly domain.

Belongs to the TBCB family. Supercomplex made of cofactors A to E. Cofactors A and D function by capturing and stabilizing tubulin in a quasi-native conformation. Cofactor E binds to the cofactor D-tubulin complex; interaction with cofactor C then causes the release of tubulin polypeptides that are committed to the native state.

The protein localises to the cytoplasm. Its subcellular location is the cytoskeleton. In terms of biological role, binds to alpha-tubulin folding intermediates after their interaction with cytosolic chaperonin in the pathway leading from newly synthesized tubulin to properly folded heterodimer. In Caenorhabditis elegans, this protein is Tubulin-specific chaperone B.